The primary structure comprises 88 residues: Small ribosomal subunit protein bS20 (88 aa).

Disordered regions lie at residues 1–23 and 69–88; these read MANSPQARKRARQAENRRQHNAA and PNKAARHKSRLNTKIKAMAA. The segment covering 69-81 has biased composition (basic residues); that stretch reads PNKAARHKSRLNT.

Belongs to the bacterial ribosomal protein bS20 family.

Its function is as follows. Binds directly to 16S ribosomal RNA. In Alcanivorax borkumensis (strain ATCC 700651 / DSM 11573 / NCIMB 13689 / SK2), this protein is Small ribosomal subunit protein bS20.